The sequence spans 908 residues: 5'-3' exoribonuclease 2 homolog (908 aa).

Residues 263–280 form a CCHC-type zinc finger; the sequence is RPCDICNGFGHEMDKCVG. Disordered regions lie at residues 409–457 and 821–908; these read RQRR…VGNY and GGNQ…YRRF. A compositionally biased stretch (polar residues) spans 432-454; sequence HGSLNQSAFGASAVGPNSQQRSV. At Ser-438 the chain carries Phosphoserine. Composition is skewed to low complexity over residues 825–868 and 878–908; these read GQSY…HNQR and QRNF…YRRF.

The protein belongs to the 5'-3' exonuclease family. XRN2/RAT1 subfamily. In terms of assembly, interacts with cuff and Rai1; the interaction with cuff may inhibit its role in RNA degradation.

It is found in the nucleus. A 5'-3' exoribonuclease. May promote the termination of transcription by RNA polymerase II and promote RNA degradation. Involved in turnover of piRNA precursors. The chain is 5'-3' exoribonuclease 2 homolog from Drosophila melanogaster (Fruit fly).